A 45-amino-acid polypeptide reads, in one-letter code: Photosystem II reaction center protein K (45 aa).

The propeptide occupies 1–8 (MEAALLLA). A helical transmembrane segment spans residues 24–44 (LPVIPVFFLLLAFVWQAAVGF).

Belongs to the PsbK family. As to quaternary structure, PSII is composed of 1 copy each of membrane proteins PsbA, PsbB, PsbC, PsbD, PsbE, PsbF, PsbH, PsbI, PsbJ, PsbK, PsbL, PsbM, PsbT, PsbX, PsbY, PsbZ, Psb30/Ycf12, peripheral proteins PsbO, CyanoQ (PsbQ), PsbU, PsbV and a large number of cofactors. It forms dimeric complexes.

It is found in the cellular thylakoid membrane. Functionally, one of the components of the core complex of photosystem II (PSII). PSII is a light-driven water:plastoquinone oxidoreductase that uses light energy to abstract electrons from H(2)O, generating O(2) and a proton gradient subsequently used for ATP formation. It consists of a core antenna complex that captures photons, and an electron transfer chain that converts photonic excitation into a charge separation. This is Photosystem II reaction center protein K from Synechococcus elongatus (strain ATCC 33912 / PCC 7942 / FACHB-805) (Anacystis nidulans R2).